The primary structure comprises 396 residues: Zinc metalloproteinase nas-24 (396 aa).

The first 20 residues, 1–20, serve as a signal peptide directing secretion; sequence MTRVVHIIGAAFLLSSYAYC. The 187-residue stretch at 44-230 folds into the Peptidase M12A domain; it reads ERLGSKWLGG…YKINQYYGCG (187 aa). N-linked (GlcNAc...) asparagine glycans are attached at residues Asn63 and Asn79. 4 disulfide bridges follow: Cys82-Cys229, Cys105-Cys129, Cys231-Cys251, and Cys253-Cys262. Position 137 (His137) interacts with Zn(2+). The active site involves Glu138. Residues His141 and His147 each coordinate Zn(2+). In terms of domain architecture, EGF-like spans 224–263; sequence NQYYGCGCSTQLECKNGGYTSPSDCSRCNCPKGFFGKLCN. The N-linked (GlcNAc...) asparagine glycan is linked to Asn310.

Requires Zn(2+) as cofactor.

Its subcellular location is the secreted. Its function is as follows. Metalloprotease. The chain is Zinc metalloproteinase nas-24 (nas-24) from Caenorhabditis elegans.